A 298-amino-acid polypeptide reads, in one-letter code: Bifunctional protein FolD (298 aa).

NADP(+)-binding positions include 165–167 (GRG), Ser194, and Ile235.

The protein belongs to the tetrahydrofolate dehydrogenase/cyclohydrolase family. Homodimer.

The catalysed reaction is (6R)-5,10-methylene-5,6,7,8-tetrahydrofolate + NADP(+) = (6R)-5,10-methenyltetrahydrofolate + NADPH. It carries out the reaction (6R)-5,10-methenyltetrahydrofolate + H2O = (6R)-10-formyltetrahydrofolate + H(+). It participates in one-carbon metabolism; tetrahydrofolate interconversion. Functionally, catalyzes the oxidation of 5,10-methylenetetrahydrofolate to 5,10-methenyltetrahydrofolate and then the hydrolysis of 5,10-methenyltetrahydrofolate to 10-formyltetrahydrofolate. The protein is Bifunctional protein FolD of Amoebophilus asiaticus (strain 5a2).